Reading from the N-terminus, the 176-residue chain is Large ribosomal subunit protein uL10 (176 aa).

Belongs to the universal ribosomal protein uL10 family. Part of the ribosomal stalk of the 50S ribosomal subunit. The N-terminus interacts with L11 and the large rRNA to form the base of the stalk. The C-terminus forms an elongated spine to which L12 dimers bind in a sequential fashion forming a multimeric L10(L12)X complex.

In terms of biological role, forms part of the ribosomal stalk, playing a central role in the interaction of the ribosome with GTP-bound translation factors. The chain is Large ribosomal subunit protein uL10 from Coprothermobacter proteolyticus (strain ATCC 35245 / DSM 5265 / OCM 4 / BT).